The following is a 128-amino-acid chain: uncharacterized protein (128 aa).

This is an uncharacterized protein from Saccharomyces cerevisiae (strain ATCC 204508 / S288c) (Baker's yeast).